The primary structure comprises 176 residues: Adenylyl-sulfate kinase (176 aa).

12 to 19 contacts ATP; it reads GLSGAGKS. Ser86 acts as the Phosphoserine intermediate in catalysis.

It belongs to the APS kinase family.

It catalyses the reaction adenosine 5'-phosphosulfate + ATP = 3'-phosphoadenylyl sulfate + ADP + H(+). It functions in the pathway sulfur metabolism; hydrogen sulfide biosynthesis; sulfite from sulfate: step 2/3. In terms of biological role, catalyzes the synthesis of activated sulfate. In Gloeothece citriformis (strain PCC 7424) (Cyanothece sp. (strain PCC 7424)), this protein is Adenylyl-sulfate kinase.